The chain runs to 1104 residues: Isoleucine--tRNA ligase (1104 aa).

Positions 48–58 (PYTTGRIHLGT) match the 'HIGH' region motif. The 'KMSKS' region signature appears at 644-648 (KMSKS). Lysine 647 is a binding site for ATP.

The protein belongs to the class-I aminoacyl-tRNA synthetase family. IleS type 2 subfamily. As to quaternary structure, monomer. Zn(2+) serves as cofactor.

The protein localises to the cytoplasm. It carries out the reaction tRNA(Ile) + L-isoleucine + ATP = L-isoleucyl-tRNA(Ile) + AMP + diphosphate. Its function is as follows. Catalyzes the attachment of isoleucine to tRNA(Ile). As IleRS can inadvertently accommodate and process structurally similar amino acids such as valine, to avoid such errors it has two additional distinct tRNA(Ile)-dependent editing activities. One activity is designated as 'pretransfer' editing and involves the hydrolysis of activated Val-AMP. The other activity is designated 'posttransfer' editing and involves deacylation of mischarged Val-tRNA(Ile). The protein is Isoleucine--tRNA ligase of Methanocella arvoryzae (strain DSM 22066 / NBRC 105507 / MRE50).